A 305-amino-acid chain; its full sequence is GMP synthase [glutamine-hydrolyzing] subunit B (305 aa).

Residues 2–184 (VNTERFIQQA…LGLPREIQHR (183 aa)) enclose the GMPS ATP-PPase domain. Position 29–35 (29–35 (SGGVDSS)) interacts with ATP.

As to quaternary structure, heterodimer composed of a glutamine amidotransferase subunit (A) and a GMP-binding subunit (B).

It catalyses the reaction XMP + L-glutamine + ATP + H2O = GMP + L-glutamate + AMP + diphosphate + 2 H(+). It functions in the pathway purine metabolism; GMP biosynthesis; GMP from XMP (L-Gln route): step 1/1. Catalyzes the synthesis of GMP from XMP. The protein is GMP synthase [glutamine-hydrolyzing] subunit B of Methanosphaerula palustris (strain ATCC BAA-1556 / DSM 19958 / E1-9c).